A 439-amino-acid polypeptide reads, in one-letter code: Proline--tRNA ligase (439 aa).

The protein belongs to the class-II aminoacyl-tRNA synthetase family. ProS type 2 subfamily. As to quaternary structure, homodimer.

The protein resides in the cytoplasm. The enzyme catalyses tRNA(Pro) + L-proline + ATP = L-prolyl-tRNA(Pro) + AMP + diphosphate. Functionally, catalyzes the attachment of proline to tRNA(Pro) in a two-step reaction: proline is first activated by ATP to form Pro-AMP and then transferred to the acceptor end of tRNA(Pro). The protein is Proline--tRNA ligase of Rhodopseudomonas palustris (strain BisB5).